A 422-amino-acid chain; its full sequence is DNA-directed RNA polymerase III subunit RPC4 (422 aa).

Disordered regions lie at residues 1–80, 115–190, 219–244, and 318–350; these read MSSN…GQQR, KSEG…DDEE, IQEA…GTGL, and RPAV…TKDA. The short motif at 25-29 is the Nuclear localization signal element; sequence KPSLK. Residues 28 to 37 show a composition bias toward basic residues; it reads LKFKPKAVAR. A compositionally biased stretch (basic and acidic residues) spans 38–64; it reads KSKEEREAAASKVKLEEESKRGNDKKH. Phosphoserine is present on residues serine 137 and serine 138. Acidic residues predominate over residues 138–148; that stretch reads SENEAEDDDNE. Residues 160–170 show a composition bias toward basic and acidic residues; it reads MGKEFEARNLI. Phosphoserine occurs at positions 178, 182, and 224. Residues 219–229 are compositionally biased toward basic and acidic residues; it reads IQEALSEKPTR. Residues threonine 228 and threonine 232 each carry the phosphothreonine modification.

This sequence belongs to the eukaryotic RPC4/POLR3D RNA polymerase subunit family. In terms of assembly, component of the RNA polymerase III (Pol III) complex consisting of 17 subunits. Interacts with RPC37/RPC5. RPC53/RPC4, RPC37/RPC5 and RPC11/RPC10 probably form a Pol III subcomplex.

Its subcellular location is the nucleus. Functionally, DNA-dependent RNA polymerase catalyzes the transcription of DNA into RNA using the four ribonucleoside triphosphates as substrates. Specific peripheric component of RNA polymerase III which synthesizes small RNAs, such as 5S rRNA and tRNAs. Essential for tRNA synthesis. The RPC53/RPC4-RPC37/RPC5 subcomplex is required for terminator recognition and reinitiation. This is DNA-directed RNA polymerase III subunit RPC4 (RPC53) from Saccharomyces cerevisiae (strain ATCC 204508 / S288c) (Baker's yeast).